The following is a 754-amino-acid chain: Elongation factor G-2, mitochondrial (754 aa).

The region spanning 63 to 340 is the tr-type G domain; the sequence is DKLRNIGISA…GVVSFLPSPN (278 aa). GTP-binding positions include 72-79, 139-143, and 193-196; these read AHIDSGKT, DTPGH, and NKLD.

Belongs to the TRAFAC class translation factor GTPase superfamily. Classic translation factor GTPase family. EF-G/EF-2 subfamily. As to expression, expressed in cotyledons and adult leaves at the same levels.

The protein resides in the mitochondrion. The protein operates within protein biosynthesis; polypeptide chain elongation. Mitochondrial GTPase that catalyzes the GTP-dependent ribosomal translocation step during translation elongation. During this step, the ribosome changes from the pre-translocational (PRE) to the post-translocational (POST) state as the newly formed A-site-bound peptidyl-tRNA and P-site-bound deacylated tRNA move to the P and E sites, respectively. Catalyzes the coordinated movement of the two tRNA molecules, the mRNA and conformational changes in the ribosome. This chain is Elongation factor G-2, mitochondrial (MEFG2), found in Arabidopsis thaliana (Mouse-ear cress).